A 147-amino-acid polypeptide reads, in one-letter code: Nucleoside diphosphate kinase (147 aa).

Positions 9, 57, 85, 91, 102, and 112 each coordinate ATP. H115 acts as the Pros-phosphohistidine intermediate in catalysis.

Belongs to the NDK family. As to quaternary structure, homotetramer. Mg(2+) serves as cofactor.

The protein localises to the cytoplasm. The catalysed reaction is a 2'-deoxyribonucleoside 5'-diphosphate + ATP = a 2'-deoxyribonucleoside 5'-triphosphate + ADP. It carries out the reaction a ribonucleoside 5'-diphosphate + ATP = a ribonucleoside 5'-triphosphate + ADP. Major role in the synthesis of nucleoside triphosphates other than ATP. The ATP gamma phosphate is transferred to the NDP beta phosphate via a ping-pong mechanism, using a phosphorylated active-site intermediate. The protein is Nucleoside diphosphate kinase of Listeria monocytogenes serotype 4a (strain HCC23).